Here is a 148-residue protein sequence, read N- to C-terminus: uncharacterized protein (148 aa).

The disordered stretch occupies residues 83 to 148 (QPAVIPPVKA…TKKSNKKTRS (66 aa)). Composition is skewed to basic residues over residues 92–103 (AKPKATKKKTPV) and 113–124 (KQTKPKQSKPKS).

This is an uncharacterized protein from Mycoplasma genitalium (strain ATCC 33530 / DSM 19775 / NCTC 10195 / G37) (Mycoplasmoides genitalium).